We begin with the raw amino-acid sequence, 404 residues long: Phosphopentomutase (404 aa).

6 residues coordinate Mn(2+): Asp-10, Asp-303, His-308, Asp-344, His-345, and His-356.

Belongs to the phosphopentomutase family. Requires Mn(2+) as cofactor.

The protein resides in the cytoplasm. It carries out the reaction 2-deoxy-alpha-D-ribose 1-phosphate = 2-deoxy-D-ribose 5-phosphate. The enzyme catalyses alpha-D-ribose 1-phosphate = D-ribose 5-phosphate. The protein operates within carbohydrate degradation; 2-deoxy-D-ribose 1-phosphate degradation; D-glyceraldehyde 3-phosphate and acetaldehyde from 2-deoxy-alpha-D-ribose 1-phosphate: step 1/2. Isomerase that catalyzes the conversion of deoxy-ribose 1-phosphate (dRib-1-P) and ribose 1-phosphate (Rib-1-P) to deoxy-ribose 5-phosphate (dRib-5-P) and ribose 5-phosphate (Rib-5-P), respectively. This Shewanella sp. (strain MR-4) protein is Phosphopentomutase.